Here is a 240-residue protein sequence, read N- to C-terminus: Aspartate/glutamate leucyltransferase (240 aa).

It belongs to the R-transferase family. Bpt subfamily.

Its subcellular location is the cytoplasm. It carries out the reaction N-terminal L-glutamyl-[protein] + L-leucyl-tRNA(Leu) = N-terminal L-leucyl-L-glutamyl-[protein] + tRNA(Leu) + H(+). The catalysed reaction is N-terminal L-aspartyl-[protein] + L-leucyl-tRNA(Leu) = N-terminal L-leucyl-L-aspartyl-[protein] + tRNA(Leu) + H(+). Its function is as follows. Functions in the N-end rule pathway of protein degradation where it conjugates Leu from its aminoacyl-tRNA to the N-termini of proteins containing an N-terminal aspartate or glutamate. The sequence is that of Aspartate/glutamate leucyltransferase from Gluconobacter oxydans (strain 621H) (Gluconobacter suboxydans).